Here is a 161-residue protein sequence, read N- to C-terminus: MRAALQNSSVIGPTVGFVRLPHAEGLPLPAYESTGAAGMDLRAAVPDDRPLLILPGKRSLVPTGLILEIPEGMEGQVRPRSGLAFKHGLTVLNSPGTVDSDYRGEVKVLLINLGDEDFAVTRGMRIAQIVFAVVTQAAVEERSLAGGTARGSGGFGSTGTV.

Residues 80-82 (RSG), asparagine 93, 97-99 (TVD), and lysine 107 each bind substrate.

This sequence belongs to the dUTPase family. It depends on Mg(2+) as a cofactor.

The enzyme catalyses dUTP + H2O = dUMP + diphosphate + H(+). Its pathway is pyrimidine metabolism; dUMP biosynthesis; dUMP from dCTP (dUTP route): step 2/2. Its function is as follows. This enzyme is involved in nucleotide metabolism: it produces dUMP, the immediate precursor of thymidine nucleotides and it decreases the intracellular concentration of dUTP so that uracil cannot be incorporated into DNA. The sequence is that of Deoxyuridine 5'-triphosphate nucleotidohydrolase from Mesorhizobium japonicum (strain LMG 29417 / CECT 9101 / MAFF 303099) (Mesorhizobium loti (strain MAFF 303099)).